The sequence spans 115 residues: UPF0235 protein CTA_0423 (115 aa).

It belongs to the UPF0235 family.

The chain is UPF0235 protein CTA_0423 from Chlamydia trachomatis serovar A (strain ATCC VR-571B / DSM 19440 / HAR-13).